The sequence spans 217 residues: Phosphatidylcholine synthase (217 aa).

Residues 1–8 (ACIGVFSL) traverse the membrane as a helical segment. The Periplasmic segment spans residues 9 to 16 (VKIYQHEY). A helical membrane pass occupies residues 17–37 (IFALWLMFITVVIDAVDGTLA). The Cytoplasmic segment spans residues 38-50 (RLVNIKKILPKID). Residues 51 to 71 (GALLDNIVDYLNYVITPCFFL) traverse the membrane as a helical segment. Topologically, residues 72–77 (LVKPGM) are periplasmic. The helical transmembrane segment at 78–98 (LPPEYSVFLIAAVSITSAYQF) threads the bilayer. Residues 99–107 (CQCDAKTPD) lie on the Cytoplasmic side of the membrane. A helical transmembrane segment spans residues 108 to 128 (HFFKGFPCYWNITILYMFIFN). Residue T129 is a topological domain, periplasmic. The chain crosses the membrane as a helical span at residues 130 to 149 (SAATNAIILIILSILIFVPV). The Cytoplasmic portion of the chain corresponds to 150-164 (KYVYPSRLDYLTESR). The chain crosses the membrane as a helical span at residues 165–185 (ILKILMHICSIIYAVSSICIL). The Periplasmic segment spans residues 186–191 (ISYPNT). Residues 192–212 (NIICLSLSVAYVGMYLFLSFY) traverse the membrane as a helical segment. The Cytoplasmic segment spans residues 213 to 217 (RTYYP).

Belongs to the CDP-alcohol phosphatidyltransferase class-I family. The cofactor is Mn(2+).

It is found in the cell inner membrane. It carries out the reaction a CDP-1,2-diacyl-sn-glycerol + choline = a 1,2-diacyl-sn-glycero-3-phosphocholine + CMP + H(+). Functionally, condenses choline with CDP-diglyceride to produce phosphatidylcholine and CMP. This is Phosphatidylcholine synthase from Legionella bozemanae (Fluoribacter bozemanae).